We begin with the raw amino-acid sequence, 339 residues long: Adenosine deaminase (339 aa).

His-15 and His-17 together coordinate Zn(2+). Residues His-17, Asp-19, and Gly-172 each contribute to the substrate site. Position 199 (His-199) interacts with Zn(2+). Glu-202 acts as the Proton donor in catalysis. A Zn(2+)-binding site is contributed by Asp-279.

It belongs to the metallo-dependent hydrolases superfamily. Adenosine and AMP deaminases family. Adenosine deaminase subfamily. Zn(2+) is required as a cofactor.

It carries out the reaction adenosine + H2O + H(+) = inosine + NH4(+). It catalyses the reaction 2'-deoxyadenosine + H2O + H(+) = 2'-deoxyinosine + NH4(+). Catalyzes the hydrolytic deamination of adenosine and 2-deoxyadenosine. The sequence is that of Adenosine deaminase from Lacticaseibacillus paracasei (strain ATCC 334 / BCRC 17002 / CCUG 31169 / CIP 107868 / KCTC 3260 / NRRL B-441) (Lactobacillus paracasei).